A 107-amino-acid chain; its full sequence is Probable monothiol glutaredoxin 2 (107 aa).

Residues 7-107 form the Glutaredoxin domain; sequence FKFIENEIKN…LEKMLKAYTR (101 aa). Lys24 serves as a coordination point for glutathione. Cys32 contacts [2Fe-2S] cluster. Glutathione-binding positions include Arg61, Phe73, and 86 to 87; that span reads CD.

The protein belongs to the glutaredoxin family. Monothiol subfamily.

This is Probable monothiol glutaredoxin 2 (grxC2) from Rickettsia conorii (strain ATCC VR-613 / Malish 7).